The primary structure comprises 431 residues: Cortical fragment-lytic enzyme (431 aa).

LysM domains follow at residues 2–46 (QIYV…TIVI) and 51–95 (QFYD…RLYI). Positions 103-431 (IESNAYLEPR…QFNVVKKTFR (329 aa)) constitute a GH18 domain. Chitin-binding positions include 148–149 (VA) and 174–177 (ENQA). Catalysis depends on E217, which acts as the Proton donor. Chitin contacts are provided by residues Y218, 280–283 (MTYE), and W406.

This sequence belongs to the glycosyl hydrolase 18 family. Chitinase class II subfamily.

It localises to the spore coat. N-acetylglucosaminidase involved in cortex peptidoglycan degradation during germination. Cleaves only partially degraded spore peptidoglycans. Recognizes muramic acid delta-lactam residues specific to spore peptidoglycans. The sequence is that of Cortical fragment-lytic enzyme from Bacillus subtilis (strain 168).